The following is a 494-amino-acid chain: Amidophosphoribosyltransferase (494 aa).

The propeptide occupies 1 to 10 (MFNYSGLNEE). C11 (nucleophile) is an active-site residue. The region spanning 11–231 (CGVFGIWNHP…AGEYVVINDK (221 aa)) is the Glutamine amidotransferase type-2 domain. S294, D356, and D357 together coordinate Mg(2+).

In the C-terminal section; belongs to the purine/pyrimidine phosphoribosyltransferase family. Mg(2+) is required as a cofactor.

It catalyses the reaction 5-phospho-beta-D-ribosylamine + L-glutamate + diphosphate = 5-phospho-alpha-D-ribose 1-diphosphate + L-glutamine + H2O. It participates in purine metabolism; IMP biosynthesis via de novo pathway; N(1)-(5-phospho-D-ribosyl)glycinamide from 5-phospho-alpha-D-ribose 1-diphosphate: step 1/2. Functionally, catalyzes the formation of phosphoribosylamine from phosphoribosylpyrophosphate (PRPP) and glutamine. The protein is Amidophosphoribosyltransferase of Staphylococcus aureus (strain COL).